The following is a 574-amino-acid chain: Septation ring formation regulator EzrA (574 aa).

The Extracellular segment spans residues 1–7 (MSSGIIL). A helical membrane pass occupies residues 8-26 (LIVAIVLLVIIAYLVGVII). Residues 27 to 574 (RKRNDTLITS…YEKTRERIRF (548 aa)) are Cytoplasmic-facing. 4 coiled-coil regions span residues 102–131 (NFIR…REAL), 161–190 (ENED…FVAL), 276–379 (VTLD…QQEK), and 459–493 (QLEA…NLEE).

This sequence belongs to the EzrA family.

The protein resides in the cell membrane. Negative regulator of FtsZ ring formation; modulates the frequency and position of FtsZ ring formation. Inhibits FtsZ ring formation at polar sites. Interacts either with FtsZ or with one of its binding partners to promote depolymerization. This Streptococcus equi subsp. zooepidemicus (strain H70) protein is Septation ring formation regulator EzrA.